The chain runs to 347 residues: GTP 3',8-cyclase (347 aa).

The 231-residue stretch at 12 to 242 (FRPFGVLRLS…QRIDARWPLR (231 aa)) folds into the Radical SAM core domain. A GTP-binding site is contributed by R19. [4Fe-4S] cluster is bound by residues C26 and C30. S-adenosyl-L-methionine is bound at residue Y32. C33 provides a ligand contact to [4Fe-4S] cluster. R65 lines the GTP pocket. G69 contacts S-adenosyl-L-methionine. T104 lines the GTP pocket. Position 129 (S129) interacts with S-adenosyl-L-methionine. Residue K178 coordinates GTP. M212 is a binding site for S-adenosyl-L-methionine. C275 and C278 together coordinate [4Fe-4S] cluster. Residue 280–282 (RLR) coordinates GTP. C292 serves as a coordination point for [4Fe-4S] cluster.

The protein belongs to the radical SAM superfamily. MoaA family. As to quaternary structure, monomer and homodimer. The cofactor is [4Fe-4S] cluster.

The enzyme catalyses GTP + AH2 + S-adenosyl-L-methionine = (8S)-3',8-cyclo-7,8-dihydroguanosine 5'-triphosphate + 5'-deoxyadenosine + L-methionine + A + H(+). Its pathway is cofactor biosynthesis; molybdopterin biosynthesis. Functionally, catalyzes the cyclization of GTP to (8S)-3',8-cyclo-7,8-dihydroguanosine 5'-triphosphate. The sequence is that of GTP 3',8-cyclase from Synechococcus sp. (strain WH7803).